A 148-amino-acid polypeptide reads, in one-letter code: Thiol-disulfide oxidoreductase YkuV (148 aa).

The Thioredoxin domain occupies 2 to 145 (KLRQPMPELT…LEKRVNRVLA (144 aa)). A disulfide bridge connects residues Cys-41 and Cys-44.

Monomer.

The protein localises to the cytoplasm. Its function is as follows. Participates in various redox reactions through the reversible oxidation of its active center dithiol to a disulfide and catalyzes dithiol-disulfide exchange reactions. This is Thiol-disulfide oxidoreductase YkuV (ykuV) from Bacillus subtilis (strain 168).